We begin with the raw amino-acid sequence, 355 residues long: NADH-quinone oxidoreductase subunit H (355 aa).

Helical transmembrane passes span 25 to 45 (IVRI…LILW), 91 to 111 (WLYL…WAVI), 126 to 146 (LLYA…AGWA), 170 to 190 (MGFA…SEIV), 205 to 225 (FLSW…VSGI), 253 to 273 (MAFA…SALA), 290 to 310 (FIPG…VFIW), and 330 to 350 (VFLP…MSPL).

It belongs to the complex I subunit 1 family. NDH-1 is composed of 14 different subunits. Subunits NuoA, H, J, K, L, M, N constitute the membrane sector of the complex.

Its subcellular location is the cell inner membrane. It catalyses the reaction a quinone + NADH + 5 H(+)(in) = a quinol + NAD(+) + 4 H(+)(out). Its function is as follows. NDH-1 shuttles electrons from NADH, via FMN and iron-sulfur (Fe-S) centers, to quinones in the respiratory chain. The immediate electron acceptor for the enzyme in this species is believed to be ubiquinone. Couples the redox reaction to proton translocation (for every two electrons transferred, four hydrogen ions are translocated across the cytoplasmic membrane), and thus conserves the redox energy in a proton gradient. This subunit may bind ubiquinone. The polypeptide is NADH-quinone oxidoreductase subunit H (Burkholderia ambifaria (strain MC40-6)).